The following is a 229-amino-acid chain: Enolase-phosphatase E1 (229 aa).

It belongs to the HAD-like hydrolase superfamily. MasA/MtnC family. Monomer. It depends on Mg(2+) as a cofactor.

It catalyses the reaction 5-methylsulfanyl-2,3-dioxopentyl phosphate + H2O = 1,2-dihydroxy-5-(methylsulfanyl)pent-1-en-3-one + phosphate. The protein operates within amino-acid biosynthesis; L-methionine biosynthesis via salvage pathway; L-methionine from S-methyl-5-thio-alpha-D-ribose 1-phosphate: step 3/6. It functions in the pathway amino-acid biosynthesis; L-methionine biosynthesis via salvage pathway; L-methionine from S-methyl-5-thio-alpha-D-ribose 1-phosphate: step 4/6. In terms of biological role, bifunctional enzyme that catalyzes the enolization of 2,3-diketo-5-methylthiopentyl-1-phosphate (DK-MTP-1-P) into the intermediate 2-hydroxy-3-keto-5-methylthiopentenyl-1-phosphate (HK-MTPenyl-1-P), which is then dephosphorylated to form the acireductone 1,2-dihydroxy-3-keto-5-methylthiopentene (DHK-MTPene). The polypeptide is Enolase-phosphatase E1 (Erwinia tasmaniensis (strain DSM 17950 / CFBP 7177 / CIP 109463 / NCPPB 4357 / Et1/99)).